The following is a 1380-amino-acid chain: DNA-directed RNA polymerase subunit beta (1380 aa).

Belongs to the RNA polymerase beta chain family. In terms of assembly, the RNAP catalytic core consists of 2 alpha, 1 beta, 1 beta' and 1 omega subunit. When a sigma factor is associated with the core the holoenzyme is formed, which can initiate transcription.

The enzyme catalyses RNA(n) + a ribonucleoside 5'-triphosphate = RNA(n+1) + diphosphate. DNA-dependent RNA polymerase catalyzes the transcription of DNA into RNA using the four ribonucleoside triphosphates as substrates. The protein is DNA-directed RNA polymerase subunit beta of Nitrobacter winogradskyi (strain ATCC 25391 / DSM 10237 / CIP 104748 / NCIMB 11846 / Nb-255).